The primary structure comprises 259 residues: Protein CDI (259 aa).

Residues 236-259 are a coiled coil; sequence FADLWLNEMEEYNKENKKEADNAK.

Mostly expressed in pollen grains and pollen tubes, and, at low levels, in seedlings, roots, stems, leaves, flowers and siliques.

The protein resides in the cytoplasm. It is found in the cytosol. Probable nucleotide-diphospho-sugar transferase required for pollen germination and tube growth. This Arabidopsis thaliana (Mouse-ear cress) protein is Protein CDI.